The sequence spans 194 residues: Ion-translocating oxidoreductase complex subunit A (194 aa).

6 consecutive transmembrane segments (helical) span residues 4 to 24 (LVLILVGAILVNNFVLVQFLG), 39 to 59 (IGLALATTFVLTLAAMCSYLL), 72 to 92 (LRTIGFILVIAVVVQFTEMLV), 102 to 122 (VLGIFLPLITTNCIVLGVALL), 135 to 155 (GINGFGAGLGFSLVLVLFAAM), and 172 to 192 (AIGLITAGLMSLAFMGFSGLI).

Belongs to the NqrDE/RnfAE family. As to quaternary structure, the complex is composed of six subunits: RnfA, RnfB, RnfC, RnfD, RnfE and RnfG.

Its subcellular location is the cell inner membrane. Part of a membrane-bound complex that couples electron transfer with translocation of ions across the membrane. This chain is Ion-translocating oxidoreductase complex subunit A, found in Azotobacter vinelandii (strain DJ / ATCC BAA-1303).